Here is a 429-residue protein sequence, read N- to C-terminus: Polypyrimidine tract-binding protein homolog 2 (429 aa).

At Ser2 the chain carries N-acetylserine. 3 consecutive RRM domains span residues 18 to 96 (KVLH…YSNR), 110 to 197 (GNVL…YSAH), and 243 to 323 (SNVL…YSRH). The segment at 331-429 (NNDRSRDYTM…QHYGGPGPMH (99 aa)) is disordered. The span at 367-381 (GGSHHQQQQQPQGGW) shows a compositional bias: low complexity. The span at 382-397 (VQPGGQGSMGMGGGGH) shows a compositional bias: gly residues.

The protein resides in the nucleus. Its function is as follows. Plays a role in pre-mRNA splicing. Binds to the polypyrimidine tract of introns. May promote the binding of U2 snRNP to pre-mRNA. The chain is Polypyrimidine tract-binding protein homolog 2 from Arabidopsis thaliana (Mouse-ear cress).